A 443-amino-acid polypeptide reads, in one-letter code: Signal recognition particle 54 kDa protein (443 aa).

Residues 104-111, 184-188, and 242-245 each bind GTP; these read GLQGSGKT, DTAGR, and TKLD.

Belongs to the GTP-binding SRP family. SRP54 subfamily. Part of the signal recognition particle protein translocation system, which is composed of SRP and FtsY. Archaeal SRP consists of a 7S RNA molecule of 300 nucleotides and two protein subunits: SRP54 and SRP19.

It localises to the cytoplasm. The enzyme catalyses GTP + H2O = GDP + phosphate + H(+). In terms of biological role, involved in targeting and insertion of nascent membrane proteins into the cytoplasmic membrane. Binds to the hydrophobic signal sequence of the ribosome-nascent chain (RNC) as it emerges from the ribosomes. The SRP-RNC complex is then targeted to the cytoplasmic membrane where it interacts with the SRP receptor FtsY. This is Signal recognition particle 54 kDa protein from Methanosarcina barkeri (strain Fusaro / DSM 804).